A 512-amino-acid chain; its full sequence is Bifunctional purine biosynthesis protein PurH (512 aa).

Positions 1–144 (MKRALVSVSD…KNYRDVVVVV (144 aa)) constitute an MGS-like domain.

This sequence belongs to the PurH family.

The catalysed reaction is (6R)-10-formyltetrahydrofolate + 5-amino-1-(5-phospho-beta-D-ribosyl)imidazole-4-carboxamide = 5-formamido-1-(5-phospho-D-ribosyl)imidazole-4-carboxamide + (6S)-5,6,7,8-tetrahydrofolate. It catalyses the reaction IMP + H2O = 5-formamido-1-(5-phospho-D-ribosyl)imidazole-4-carboxamide. Its pathway is purine metabolism; IMP biosynthesis via de novo pathway; 5-formamido-1-(5-phospho-D-ribosyl)imidazole-4-carboxamide from 5-amino-1-(5-phospho-D-ribosyl)imidazole-4-carboxamide (10-formyl THF route): step 1/1. It functions in the pathway purine metabolism; IMP biosynthesis via de novo pathway; IMP from 5-formamido-1-(5-phospho-D-ribosyl)imidazole-4-carboxamide: step 1/1. The sequence is that of Bifunctional purine biosynthesis protein PurH from Ligilactobacillus salivarius (strain UCC118) (Lactobacillus salivarius).